Consider the following 252-residue polypeptide: tRNA (guanine-N(7)-)-methyltransferase (252 aa).

Residues Glu51, Asp76, Asn103, and Asp125 each contribute to the S-adenosyl-L-methionine site. The active site involves Asp125. Substrate-binding positions include Lys129, Asp159, and 199 to 202 (TYYE).

The protein belongs to the class I-like SAM-binding methyltransferase superfamily. TrmB family.

It carries out the reaction guanosine(46) in tRNA + S-adenosyl-L-methionine = N(7)-methylguanosine(46) in tRNA + S-adenosyl-L-homocysteine. It participates in tRNA modification; N(7)-methylguanine-tRNA biosynthesis. Functionally, catalyzes the formation of N(7)-methylguanine at position 46 (m7G46) in tRNA. The polypeptide is tRNA (guanine-N(7)-)-methyltransferase (Bacteroides thetaiotaomicron (strain ATCC 29148 / DSM 2079 / JCM 5827 / CCUG 10774 / NCTC 10582 / VPI-5482 / E50)).